Here is a 153-residue protein sequence, read N- to C-terminus: Cell division protein SepF (153 aa).

This sequence belongs to the SepF family. Homodimer. Interacts with FtsZ.

It localises to the cytoplasm. Functionally, cell division protein that is part of the divisome complex and is recruited early to the Z-ring. Probably stimulates Z-ring formation, perhaps through the cross-linking of FtsZ protofilaments. Its function overlaps with FtsA. This chain is Cell division protein SepF, found in Clostridium tetani (strain Massachusetts / E88).